We begin with the raw amino-acid sequence, 152 residues long: Ribosome maturation factor RimP (152 aa).

It belongs to the RimP family.

Its subcellular location is the cytoplasm. Its function is as follows. Required for maturation of 30S ribosomal subunits. This chain is Ribosome maturation factor RimP, found in Brevibacillus brevis (strain 47 / JCM 6285 / NBRC 100599).